The chain runs to 314 residues: Acetyl-coenzyme A carboxylase carboxyl transferase subunit alpha (314 aa).

Residues 32-289 (EIDMLEASLE…KSAFVEQLDS (258 aa)) enclose the CoA carboxyltransferase C-terminal domain.

This sequence belongs to the AccA family. As to quaternary structure, acetyl-CoA carboxylase is a heterohexamer composed of biotin carboxyl carrier protein (AccB), biotin carboxylase (AccC) and two subunits each of ACCase subunit alpha (AccA) and ACCase subunit beta (AccD).

The protein resides in the cytoplasm. The enzyme catalyses N(6)-carboxybiotinyl-L-lysyl-[protein] + acetyl-CoA = N(6)-biotinyl-L-lysyl-[protein] + malonyl-CoA. The protein operates within lipid metabolism; malonyl-CoA biosynthesis; malonyl-CoA from acetyl-CoA: step 1/1. Component of the acetyl coenzyme A carboxylase (ACC) complex. First, biotin carboxylase catalyzes the carboxylation of biotin on its carrier protein (BCCP) and then the CO(2) group is transferred by the carboxyltransferase to acetyl-CoA to form malonyl-CoA. This Staphylococcus aureus (strain bovine RF122 / ET3-1) protein is Acetyl-coenzyme A carboxylase carboxyl transferase subunit alpha.